A 450-amino-acid polypeptide reads, in one-letter code: 3-phosphoshikimate 1-carboxyvinyltransferase (450 aa).

Positions 1–26 (MSAHGDPIPMTAHPSGPLSGTAQVPG) are disordered. Lys28, Ser29, and Arg33 together coordinate 3-phosphoshikimate. Residue Lys28 participates in phosphoenolpyruvate binding. Residues Gly101 and Arg129 each contribute to the phosphoenolpyruvate site. Residues Ser174, Gln176, Asp327, and Lys354 each contribute to the 3-phosphoshikimate site. Gln176 is a binding site for phosphoenolpyruvate. The active-site Proton acceptor is the Asp327. Residues Arg358 and Arg403 each contribute to the phosphoenolpyruvate site.

The protein belongs to the EPSP synthase family. Monomer.

The protein localises to the cytoplasm. The catalysed reaction is 3-phosphoshikimate + phosphoenolpyruvate = 5-O-(1-carboxyvinyl)-3-phosphoshikimate + phosphate. It participates in metabolic intermediate biosynthesis; chorismate biosynthesis; chorismate from D-erythrose 4-phosphate and phosphoenolpyruvate: step 6/7. Functionally, catalyzes the transfer of the enolpyruvyl moiety of phosphoenolpyruvate (PEP) to the 5-hydroxyl of shikimate-3-phosphate (S3P) to produce enolpyruvyl shikimate-3-phosphate and inorganic phosphate. The chain is 3-phosphoshikimate 1-carboxyvinyltransferase from Dinoroseobacter shibae (strain DSM 16493 / NCIMB 14021 / DFL 12).